Reading from the N-terminus, the 206-residue chain is MFIKVNTKYFIDQYALQAQNQKLRSRSWFKLQSIDRLDKLLKQGMTVIDLGSTPGGWSSYVIKQISNLGTIVSCDILPMKKIAGVKFLQGDCSNINFLNEIDLKIKHKRAQVVLSDMSPNTTGISTVDVCKSIYLGKIALNMCCRFLAPGGSFLVKIFQGDGFDQYLYNLKCLFHKVKVRKPSSSRSHSREVYIVSKDFKYKRINI.

Residues G55, W57, D75, D91, and D116 each coordinate S-adenosyl-L-methionine. K156 (proton acceptor) is an active-site residue.

Belongs to the class I-like SAM-binding methyltransferase superfamily. RNA methyltransferase RlmE family.

Its subcellular location is the cytoplasm. It carries out the reaction uridine(2552) in 23S rRNA + S-adenosyl-L-methionine = 2'-O-methyluridine(2552) in 23S rRNA + S-adenosyl-L-homocysteine + H(+). Specifically methylates the uridine in position 2552 of 23S rRNA at the 2'-O position of the ribose in the fully assembled 50S ribosomal subunit. This Blochmanniella floridana protein is Ribosomal RNA large subunit methyltransferase E.